The following is a 318-amino-acid chain: MSSRPPYLPPIPTHVPGATAAELAALPEPVILISGISGGGKSVALNALEDAGYFCVDNLPPELLPEFIRLQRAQAVRKVAVAVDVRNAASLPKLLPLVDQLRREGTRILPMFLESRSDTLVRRFSETRRRHPLSSRQDDQGQTRSALIDAIEHERELLASLREVSTVIDTSDLRPAQLRTWVRQLVGAAHSSLTLVFESFAFKHGVPRDADLVFDLRVLPNPHYVRELRPLNGRDAGVIDFMHAQPEAAEMLAQIEGFLLRWLPSYAMDQRSYLTVALGCTGGQHRSVYGAEQLAQRFRERVPTLVRHREIEAREAVL.

35 to 42 (GISGGGKS) is a binding site for ATP. 84 to 87 (DVRN) is a GTP binding site.

The protein belongs to the RapZ-like family.

In terms of biological role, displays ATPase and GTPase activities. The chain is Nucleotide-binding protein Lcho_3490 from Leptothrix cholodnii (strain ATCC 51168 / LMG 8142 / SP-6) (Leptothrix discophora (strain SP-6)).